A 149-amino-acid chain; its full sequence is Protein FAM72A (149 aa).

Belongs to the FAM72 family. Interacts with UNG. As to expression, expressed at high levels in stomach and also in kidney and, at low levels, in heart (at protein level). In the stomach, highly expressed in foveolar cells, parietal cells and chief cells (at protein level). In kidney, expressed in endothelial cells, mesangial and epithelial cells (parietal and visceral epithelium) around glomerulus (at protein level).

It localises to the cytoplasm. The protein localises to the mitochondrion. May play a role in the regulation of cellular reactive oxygen species metabolism. May participate in cell growth regulation. The chain is Protein FAM72A (Fam72a) from Rattus norvegicus (Rat).